Consider the following 548-residue polypeptide: MEAPRSDQAHTDATTPMEAIRTTSLGTNNYGPVPDDYLDLPVREVNDGADLREYITETRTGEIIKPIKSNVTGKTEDWKMVTFTIDDPENPKNWSKAFKWYCTMVVAFTCFVVAFCSSVITADVEGPIEEFGIGREASLVVITVFVIGFGLGPMVFAPMSEIVGRRPVYALTLALAVIFVIPCAVSKNIGTLIVCRLIDGIAFSAPMTLVGGTLADLWKSEERGVPMAAFSAAPFIGPAIGPLVGGYLADNCGWRWLYWIQLILAFVAWVMITFTVPETFAPILLKKRAQKLRKAEDDPKYTTETELDARPMGEKLRIFLFRPFQLLFLEPIVLFISLYMSVIYGLLYMFFVAYPIVYMGGKGWSASNTGLMFIPLAIGVIFSACCAPFVNNHYLKVSVAYGGKPPAEKRLIPMMWACWCIPSGLFVFAWTSYPDLHWMGPAMGGFLIGVGVILLYNSANNYLVDTYQHQAASALAAKTFIRSIWGACTVLFTEQMYERLGDQWASTLLAFIGLACCAIPYVFYFKGESIRRFSKFAFSDDEEKAIKA.

Positions 1–10 (MEAPRSDQAH) are enriched in basic and acidic residues. Residues 1–32 (MEAPRSDQAHTDATTPMEAIRTTSLGTNNYGP) are disordered. The span at 21–30 (RTTSLGTNNY) shows a compositional bias: polar residues. 2 N-linked (GlcNAc...) asparagine glycosylation sites follow: Asn70 and Asn93. 12 consecutive transmembrane segments (helical) span residues 100-120 (WYCTMVVAFTCFVVAFCSSVI), 139-159 (LVVITVFVIGFGLGPMVFAPM), 174-194 (ALAVIFVIPCAVSKNIGTLIV), 197-217 (LIDGIAFSAPMTLVGGTLADL), 224-244 (GVPMAAFSAAPFIGPAIGPLV), 256-276 (WLYWIQLILAFVAWVMITFTV), 332-352 (IVLFISLYMSVIYGLLYMFFV), 370-390 (GLMFIPLAIGVIFSACCAPFV), 411-431 (LIPMMWACWCIPSGLFVFAWT), 436-456 (LHWMGPAMGGFLIGVGVILLY), 471-493 (AASALAAKTFIRSIWGACTVLFT), and 505-525 (ASTLLAFIGLACCAIPYVFYF). Residues 258-269 (YWIQLILAFVAW) carry the Peroxisomal targeting signal motif.

Belongs to the major facilitator superfamily. DHA1 family. Polyamines/proton antiporter (TC 2.A.1.2.16) subfamily.

Its subcellular location is the peroxisome membrane. MFS-type transporter involved in penicillin production, most likely through the translocation of side-chain precursors (phenylacetic acid and phenoxyacetic acid) from the cytosol to the peroxisomal lumen across the peroxisomal membrane. The polypeptide is MFS-rype transporter paaT (Penicillium rubens (strain ATCC 28089 / DSM 1075 / NRRL 1951 / Wisconsin 54-1255) (Penicillium chrysogenum)).